A 223-amino-acid polypeptide reads, in one-letter code: Proteinase inhibitor type-2 TR8 (223 aa).

An N-terminal signal peptide occupies residues 1–24 (MAIYKVALLLLFGMILLASDFEHA). 3 repeat units span residues 24 to 81 (AKAC…EWVS), 88 to 145 (KKAC…EWVS), and 152 to 209 (EKDC…EWVS). Disulfide bonds link cysteine 27–cysteine 120, cysteine 31–cysteine 116, cysteine 40–cysteine 126, cysteine 52–cysteine 95, cysteine 55–cysteine 73, cysteine 56–cysteine 91, cysteine 62–cysteine 104, and cysteine 119–cysteine 137.

The protein belongs to the protease inhibitor I20 (potato type II proteinase inhibitor) family.

This is Proteinase inhibitor type-2 TR8 (ARPI) from Solanum lycopersicum (Tomato).